A 192-amino-acid polypeptide reads, in one-letter code: Endoribonuclease YbeY (192 aa).

Zn(2+)-binding residues include histidine 109, histidine 113, and histidine 119. A disordered region spans residues valine 142–arginine 192. A compositionally biased stretch (low complexity) spans threonine 159 to glycine 180.

It belongs to the endoribonuclease YbeY family. Zn(2+) serves as cofactor.

It is found in the cytoplasm. Functionally, single strand-specific metallo-endoribonuclease involved in late-stage 70S ribosome quality control and in maturation of the 3' terminus of the 16S rRNA. The polypeptide is Endoribonuclease YbeY (Anaeromyxobacter sp. (strain Fw109-5)).